Here is a 48-residue protein sequence, read N- to C-terminus: Histone H4 (48 aa).

Gly residues predominate over residues 1–14 (MGGKGGKGGKGLGK). Residues 1-23 (MGGKGGKGGKGLGKVGAKKRHSR) form a disordered region.

It belongs to the histone H4 family. In terms of assembly, the nucleosome is a histone octamer containing two molecules each of H2A, H2B, H3 and H4 assembled in one H3-H4 heterotetramer and two H2A-H2B heterodimers. The octamer wraps approximately 147 bp of DNA.

Its subcellular location is the nucleus. The protein resides in the chromosome. In terms of biological role, core component of nucleosome. Nucleosomes wrap and compact DNA into chromatin, limiting DNA accessibility to the cellular machineries which require DNA as a template. Histones thereby play a central role in transcription regulation, DNA repair, DNA replication and chromosomal stability. DNA accessibility is regulated via a complex set of post-translational modifications of histones, also called histone code, and nucleosome remodeling. This chain is Histone H4, found in Blepharisma japonicum.